Here is a 242-residue protein sequence, read N- to C-terminus: ATP-dependent dethiobiotin synthetase BioD (242 aa).

12–17 (EVGKTV) contacts ATP. Thr16 contributes to the Mg(2+) binding site. Residue Lys37 is part of the active site. Ser41 is a substrate binding site. ATP is bound by residues Asp51 and 112–115 (EGAG). The Mg(2+) site is built by Asp51 and Glu112.

The protein belongs to the dethiobiotin synthetase family. Homodimer. It depends on Mg(2+) as a cofactor.

The protein localises to the cytoplasm. It carries out the reaction (7R,8S)-7,8-diammoniononanoate + CO2 + ATP = (4R,5S)-dethiobiotin + ADP + phosphate + 3 H(+). It functions in the pathway cofactor biosynthesis; biotin biosynthesis; biotin from 7,8-diaminononanoate: step 1/2. Catalyzes a mechanistically unusual reaction, the ATP-dependent insertion of CO2 between the N7 and N8 nitrogen atoms of 7,8-diaminopelargonic acid (DAPA, also called 7,8-diammoniononanoate) to form a ureido ring. In Bacillus thuringiensis subsp. konkukian (strain 97-27), this protein is ATP-dependent dethiobiotin synthetase BioD.